The following is a 614-amino-acid chain: ATP-dependent rRNA helicase SPB4 (614 aa).

The Q motif signature appears at 10-38; that stretch reads WSVLKCDLHPWIKEAIKSLGYPTMTPVQA. Residues 41–233 form the Helicase ATP-binding domain; it reads IPLFSGNKDV…RTGMANPVKI (193 aa). ATP is bound at residue 54 to 61; the sequence is AVTGSGKT. The short motif at 181-184 is the DEAD box element; it reads DEAD. Residues 260–431 form the Helicase C-terminal domain; that stretch reads KISALIALIK…KFQKKFRKYM (172 aa). The stretch at 510-581 forms a coiled coil; that stretch reads EYADKQKEES…IEKQLMDDSS (72 aa). Basic and acidic residues predominate over residues 514–529; the sequence is KQKEESRKKNLEEDKA. Residues 514-614 form a disordered region; sequence KQKEESRKKN…DSMQGSFDDL (101 aa). A compositionally biased stretch (basic residues) spans 530 to 541; it reads RKVHDAKKRKEL. Composition is skewed to basic and acidic residues over residues 551-563 and 584-595; these read KTDK…ERRE and EETKVDWKEMVK. Over residues 604–614 the composition is skewed to polar residues; sequence SDSMQGSFDDL.

It belongs to the DEAD box helicase family. DDX55/SPB4 subfamily. Component of pre-60S ribosomal complexes.

The protein localises to the nucleus. It is found in the nucleolus. It carries out the reaction ATP + H2O = ADP + phosphate + H(+). ATP-binding RNA helicase involved in the biogenesis of 60S ribosomal subunits. Binds 90S pre-ribosomal particles and dissociates from pre-60S ribosomal particles after processing of 27SB pre-rRNA. Required for the normal formation of 18S rRNA through the processing of pre-rRNAs at sites A0, A1 and A2, and the normal formation of 25S and 5.8S rRNAs through the processing of pre-rRNAs at sites C1 and C2. The polypeptide is ATP-dependent rRNA helicase SPB4 (Debaryomyces hansenii (strain ATCC 36239 / CBS 767 / BCRC 21394 / JCM 1990 / NBRC 0083 / IGC 2968) (Yeast)).